The sequence spans 310 residues: Succinate dehydrogenase assembly factor 2, mitochondrial (310 aa).

Residues 35–48 (LKDGSDEASPEVKA) show a composition bias toward basic and acidic residues. The disordered stretch occupies residues 35–67 (LKDGSDEASPEVKAHRANQANKAPNQFVPNTTS). Positions 52-67 (NQANKAPNQFVPNTTS) are enriched in polar residues.

It belongs to the SDHAF2 family. Interacts with the flavoprotein subunit within the SDH catalytic dimer.

It is found in the mitochondrion matrix. Its function is as follows. Plays an essential role in the assembly of succinate dehydrogenase (SDH), an enzyme complex (also referred to as respiratory complex II) that is a component of both the tricarboxylic acid (TCA) cycle and the mitochondrial electron transport chain, and which couples the oxidation of succinate to fumarate with the reduction of ubiquinone (coenzyme Q) to ubiquinol. Required for flavinylation (covalent attachment of FAD) of the flavoprotein subunit of the SDH catalytic dimer. This is Succinate dehydrogenase assembly factor 2, mitochondrial from Penicillium rubens (strain ATCC 28089 / DSM 1075 / NRRL 1951 / Wisconsin 54-1255) (Penicillium chrysogenum).